A 397-amino-acid chain; its full sequence is Mannonate dehydratase (397 aa).

Belongs to the mannonate dehydratase family. Requires Fe(2+) as cofactor. Mn(2+) is required as a cofactor.

The enzyme catalyses D-mannonate = 2-dehydro-3-deoxy-D-gluconate + H2O. It participates in carbohydrate metabolism; pentose and glucuronate interconversion. Its function is as follows. Catalyzes the dehydration of D-mannonate. In Yersinia pestis bv. Antiqua (strain Antiqua), this protein is Mannonate dehydratase.